A 388-amino-acid polypeptide reads, in one-letter code: MPLSDAMPALLVLADGTAYRGWSFGATGTTIGEVVFNTGMTGYQEVLTDPSYRGQIVVFTYPELGNTGVNPEDEESARPQVRGAIARNICHKPSNWRSTQSLPDYLKQHHIPGIFGIDTRALTRKIRMYGAMNGGISTEILDEAELLEQVQAAPNMAGLNLVREVTTSTVYEWSDPTTAVWEFNPDGTVKNGESLTVVALDFGVKRNILRRLASYGCRVIVVPADTSPEEILKYNPDGIFLSNGPGDPSAVTEGITTAKALLESEKPIFGICMGHQILGHALGAETFKLKFGHRGLNQPAGLTQRVEITSQNHSFAIDPDSLPEAVVEISHLNLNDRTVAGLRHKSLPIFSVQYHPEASPGPHDADYLFAQFVHQMRTTKQATTAEVS.

The CPSase stretch occupies residues 1–192; that stretch reads MPLSDAMPAL…FNPDGTVKNG (192 aa). Positions 51, 244, and 246 each coordinate L-glutamine. Residues 196 to 382 form the Glutamine amidotransferase type-1 domain; it reads TVVALDFGVK…VHQMRTTKQA (187 aa). The active-site Nucleophile is Cys-272. L-glutamine-binding residues include Met-273, Gln-276, Asn-312, and Phe-315. Catalysis depends on residues His-355 and Glu-357.

It belongs to the CarA family. In terms of assembly, composed of two chains; the small (or glutamine) chain promotes the hydrolysis of glutamine to ammonia, which is used by the large (or ammonia) chain to synthesize carbamoyl phosphate. Tetramer of heterodimers (alpha,beta)4.

The catalysed reaction is hydrogencarbonate + L-glutamine + 2 ATP + H2O = carbamoyl phosphate + L-glutamate + 2 ADP + phosphate + 2 H(+). The enzyme catalyses L-glutamine + H2O = L-glutamate + NH4(+). The protein operates within amino-acid biosynthesis; L-arginine biosynthesis; carbamoyl phosphate from bicarbonate: step 1/1. It participates in pyrimidine metabolism; UMP biosynthesis via de novo pathway; (S)-dihydroorotate from bicarbonate: step 1/3. In terms of biological role, small subunit of the glutamine-dependent carbamoyl phosphate synthetase (CPSase). CPSase catalyzes the formation of carbamoyl phosphate from the ammonia moiety of glutamine, carbonate, and phosphate donated by ATP, constituting the first step of 2 biosynthetic pathways, one leading to arginine and/or urea and the other to pyrimidine nucleotides. The small subunit (glutamine amidotransferase) binds and cleaves glutamine to supply the large subunit with the substrate ammonia. In Nostoc sp. (strain PCC 7120 / SAG 25.82 / UTEX 2576), this protein is Carbamoyl phosphate synthase small chain.